The primary structure comprises 428 residues: 3-phosphoshikimate 1-carboxyvinyltransferase (428 aa).

Residues lysine 21, serine 22, and arginine 26 each coordinate 3-phosphoshikimate. Phosphoenolpyruvate is bound at residue lysine 21. Residues glycine 93 and arginine 121 each contribute to the phosphoenolpyruvate site. 3-phosphoshikimate contacts are provided by serine 166, glutamine 168, aspartate 314, and lysine 341. Residue glutamine 168 coordinates phosphoenolpyruvate. Residue aspartate 314 is the Proton acceptor of the active site. Arginine 345 and arginine 388 together coordinate phosphoenolpyruvate.

The protein belongs to the EPSP synthase family. As to quaternary structure, monomer.

The protein localises to the cytoplasm. The enzyme catalyses 3-phosphoshikimate + phosphoenolpyruvate = 5-O-(1-carboxyvinyl)-3-phosphoshikimate + phosphate. It functions in the pathway metabolic intermediate biosynthesis; chorismate biosynthesis; chorismate from D-erythrose 4-phosphate and phosphoenolpyruvate: step 6/7. Functionally, catalyzes the transfer of the enolpyruvyl moiety of phosphoenolpyruvate (PEP) to the 5-hydroxyl of shikimate-3-phosphate (S3P) to produce enolpyruvyl shikimate-3-phosphate and inorganic phosphate. The sequence is that of 3-phosphoshikimate 1-carboxyvinyltransferase from Syntrophomonas wolfei subsp. wolfei (strain DSM 2245B / Goettingen).